The chain runs to 439 residues: Probable threonine protease PRSS50 (439 aa).

Disordered regions lie at residues 1-22 (MEPWCGAEVRGQGPQGPRVPGA) and 48-130 (ERIR…TMAP). A signal peptide spans 1-47 (MEPWCGAEVRGQGPQGPRVPGASRSRSRALLLLLLLLLLLLPRRPAG). Residues 9 to 21 (VRGQGPQGPRVPG) are compositionally biased toward low complexity. At 48-415 (ERIRPRRPPR…WIWDRLSGEP (368 aa)) the chain is on the extracellular side. Over residues 51 to 61 (RPRRPPRHAHP) the composition is skewed to basic residues. Positions 112–127 (QAQTNQTTTAPPNSQT) are enriched in low complexity. Residues Asn-116 and Asn-187 are each glycosylated (N-linked (GlcNAc...) asparagine). A Peptidase S1 domain is found at 157 to 412 (FCGSSHEPDP…YRPWIWDRLS (256 aa)). Cys-192 and Cys-208 form a disulfide bridge. His-207 acts as the Charge relay system in catalysis. A glycan (N-linked (GlcNAc...) asparagine) is linked at Asn-226. Asp-260 acts as the Charge relay system in catalysis. Disulfide bonds link Cys-294–Cys-370, Cys-327–Cys-350, and Cys-360–Cys-388. Residue Thr-364 is the Charge relay system of the active site. A helical transmembrane segment spans residues 416-436 (LALPAPSRTLLLAFLLLLILL). Over 437–439 (GTL) the chain is Cytoplasmic.

The protein belongs to the peptidase S1 family.

It localises to the membrane. In terms of biological role, may be involved in proteolysis through its threonine endopeptidase activity. The protein is Probable threonine protease PRSS50 (Prss50) of Mus musculus (Mouse).